The primary structure comprises 268 residues: Putative pyruvate, phosphate dikinase regulatory protein (268 aa).

147–154 (GLSRTSKT) is an ADP binding site.

This sequence belongs to the pyruvate, phosphate/water dikinase regulatory protein family. PDRP subfamily.

The catalysed reaction is N(tele)-phospho-L-histidyl/L-threonyl-[pyruvate, phosphate dikinase] + ADP = N(tele)-phospho-L-histidyl/O-phospho-L-threonyl-[pyruvate, phosphate dikinase] + AMP + H(+). It catalyses the reaction N(tele)-phospho-L-histidyl/O-phospho-L-threonyl-[pyruvate, phosphate dikinase] + phosphate + H(+) = N(tele)-phospho-L-histidyl/L-threonyl-[pyruvate, phosphate dikinase] + diphosphate. Functionally, bifunctional serine/threonine kinase and phosphorylase involved in the regulation of the pyruvate, phosphate dikinase (PPDK) by catalyzing its phosphorylation/dephosphorylation. The chain is Putative pyruvate, phosphate dikinase regulatory protein from Clostridium beijerinckii (strain ATCC 51743 / NCIMB 8052) (Clostridium acetobutylicum).